The primary structure comprises 5541 residues: MGDKRPDGIKSAESHGQPSAPFGAENSEVVQRTLEAVIAQATDVIDTASISLRVVQVENTGEVNSTILKVTRNKAAECIPSPARSSSPDQEGDCSSIVTVQRSHECKSFCATPLTRTASTASVASSLSTLRPGSSEKEDDIARDESAKVHADPWHVALAEAHAPLELFTDRPRHSGLSLARAQHTFRIDTPLKQLLASLSVEHKLSFSTTILVGWSIVLSRLTGQEDILVGLGNVDTPIMPVRIDLAGDPNTPQLLARVRDTLLVAGASPDLKDKCNTRLLPLFPGETFPSVQAEFYAHGDQASDKIQNSAPASVDIELHLHDAAQDAFACIRYPTALFNADTIERHAGYLVAVLMNMVINGSQSVATIDIISPAEKTLVLKTWNESSSEYPADRCVQRLFEEQVDKSPDAVAIVHENQSFTYLELDALADRIAHKLVHAGIKQGDFVTTLLPRSVELVAAQLAVLKVGAAYVPIDPKAPLDRQVFIVNDSASRLLITDIHVETATALDLPLLRIDIAELQSKEEYSGVITLTRSSQDAAYVMYTSGSTGRPKGVMVLHQGIVRLVMNNGFAPIGPGDRVAFAANPAFDASTFEVWAPLLNGGCLVVIDSDTSAHPKRLEDALKRYHINTLWLTMTLFNQYVCSIGPALAKLKYLLCGGEQGNQETFAALLKHGGPQNLINGYGPTEATTFATTYNASRMRNKPDRLPIGRPIGSTYVYVLDKHGNLAPLGAVGELHIAGAGVAAGYLNRPDLTAEKFLPNPFSKTQGAYMYKSGDLVRYLPDGNLVFVGRNDDQVKIRGFRIELGEIEARLVEHDLVRESVVLALGEGSEKRLVAYVVAEPTEGLAHTLRSHIEERLPVYMIPAAFVRLGAIPVTANGKIDRRALPEPQEDAFARQAYEVPCGETEDAIAAIWSELLGVNQISRHDSFFALGGHSLLVVKMLDRLHRLGLTVSVRVLFESPTLSVLAQDLSKHQAMIIPPNLITLETSKLTPEMLPLIDLKQDDIDRIISQVPGGIHNIQDVYSLAPLQDGILFHHLLAAEGDPYLLISHLAFRDRVLVDRYLDAFQKVVDRHDILRTAVFWDALSTPAQVVLRSAPLSVTEHVLDPAAGPVADKLSQRYNHSKYRMDLTQAPLLRFALAEDIDGRWIMAQMMHHLIIDHAAIEVMNAEVEAVLEGREDTLSTPPQFRDLVAQVRAGPTQEEHEHFFAEMLGDIEEPTFPFGLTEVHSNGDEVKEAHMTVPQDLNDRLRAQAKRLGVTLAALCHTAWAQVLARTSGQDHVVFGTVLVGGLQGEQSDQSGMGISINTLPFRCDMDDRSVQECVSQIHSRLAALVEHENASLALAQRCSGVPAGSPLFSALMNYRHTLMPTSGCDPSDIEFTAKEERVNYGGIDFLGGQERTNYPFTLSVEDFGQALGLTAQVLQPVDPADVCRYVQQALSSLVLALENAPDMAVSDLDVLPLDERTKLLQLWNATNSPYPDHLCVHALFEQQVKQSPITIAVEHGDQSITYAQLNITASHLAYQLSAQGIGHGDRVATYLPRSFELITAQLAILKIGANYVPIDPKAPLDRQAYIVSDSGSRLVITDEDTDVPVAIGAPLLRLTSFRKLQLSTAMDAGWRAYSGLDSPKTTIERSSLETAYIMYTSGSTGLPKGVMVPHRGIARLVFNNSFTSISSSDRIVFGANPAFDASTFEVWAPLLNGGRVVIIDAEVLTDSRLLAETIETRQVTVLFLTPALFNQYAESIGQSLARLRYIISGGEQGNLEAYSALLRHKGPVQIINAYGPTEATMVATTFTASFDVSGLDVLPIGRPIGNTQVYVLDQHRHPVPMGVVGELYISGPGVANGYLNRLDLTEDRFFPDPFTEIHGSRMYKSGDMVRYLPDGNLVYMGRNDDQIKIRGFRVELGEIEARLVQHSQVRNAVVVPCGEVDDKRLVAYIAADPSEHWARTLHNHLASTLPEYMIPSAFVQLDALPMNNNGKIDRRALPTPDASAFATENYVSPQGRIECALAEIWAEVLKVPRVGRHDNFFLLGGHSLLAVRLMNRISTLGAQLPLSALFASPTLSSFAQAFKGQLSQDDQSHNVIPRVSRSEPLELSFSQQRLWFLAQMEGVSEIYHIPSVLRLRGTLNLEAWQRTLDTLFARHESLRTVFSTVQSQPQIKILPADLGLPLVHHDLRGEQDKHASLKLLSAAEAIMPFDLERGPLIRAQLIQLTDDEHIFLLTQHHIVSDGWSFGILIRELRELYIAYRNGLPNPLRPLAIQYPDYAAWQRCWLNEGRLEAQSAYWKKTLAEAPVSIELPTDRPRPPQQSFTGASVPVRVDAHVTQALKALSQKHGATMFMVVLSAWSAVLSRLSGQDDIVIGSPSANRGHEQVEQLIGFFVNTLALRVDLSGQPNMEQLLKRVRETTVSAQAHQDLPFEQVVEIAQPPRRMDQTPLFQVLFAWQNNDIEMLRLPDLDVTVEELSYDIVKFDLELELYEDKDEICGCLHYSTALFDASTVARHVGYLEAMLRAMATNISQPIETVELLGSTEEELLLQTWNQTEKPFPDDRCIHGLFEDQVERSPDAIAVVHDDRILTYRELNVRADIVAFQLARAGVRPGDSVLTLLSRSINSVVSQIAILKAGAVYVPMDPKAPADRLAYMAADSCARLLVTDECLIVPISIQVPILRLENQPSKNPERHDIVVISRETTANDTAYVMYTSGSTGLPKGVMVSHRAITRLVVNNRLAHITSDDRMALSINPTFDPSTFEVWAPLLHGAQLVILDHDIITDAQCLAEALDHNDITFLVLPMALFHQFAFVIAPALSRLRYIMCGGEQGSIEAFSSILQQGGRVRLINGYGPTEVTTVTTAYVATGSLVSLDRLPIGRPISNTRVYVLDKLRRPVPLGAVGELYIGGPGVATGYLNRPELTAERFLTDPFSKIEGARMYKSGDLVRYLSDGNLIFMGRNDDQVKIRGFRVELGEIEERLLEHALVRETVVVVTGEGNGKRLVAYIVSEPTVQLPVLMREHLGASLPEYMIPTAFVRLETMPLTNNGKVDRRALPEPDSDSFVNKDYEEPQGEVEMKLAAIWSELLKVDKIGRQDNFFMLGGHSLLAVQMIGQLRRIGFVMSVRALFETPVLSVLAASITRGCEVPETPATPVNLITATTAKITPDLLPLIDLSQDDIDRITDQIPGGVANIQDIYSLSPLQDGILFHHMMATEDDPYLLTICTAFRDRDLLERYLDAIQQIVDRHDILRTAIVWRNMTTPAQVVLRKAAISVTELTLDPANSPIIEQLRKLYDARKHRIELDVAPLNRYAVAQDTDGRWIMIQMLHHIVGDHSTLELMDEEIQKIFSGRGETLAAPQPFRNLIAQVRSGLTFQEHEEFFSKMLSDIDAPALPYGLSDVHREGANVTETQLMLPQKLNDRLRSQARRLGVSLASLCHLAWAQVIAATSGQYHVVFGTVLFGRMQGGSGADRAMGLFINTLPLRVDVEKGSILESVHKVQTDLATLLEHEHASLALAQRCSSIPSGSPLFSALLNYRHNDDTFTQSELDSGIEIIDGHERTNYPFVLSVEDCGTSFGVTVQVVEPYASASVCGYMQQVLQSLADALEHTPDAPIQGLKVIPAEEHDLLIHSWNRTDSPFPAHECVHHVFENQVRERPEAIALVHGDQTLTYCELNTRANNLARQLLDAGVKPGDLVPTLLSRSIDLVTAQLAIVKAGAAYVPIDVKAPADRQAYIVSDSGARLLVTGEHTVVHDSIQAQLFRLGAIDAKNLHQQDASVSIGAIGTSCDTAYVMYTSGSTGMPKGVMIPHRGITRLVINNGHANYGPDDCVVFGANPAFDASTIEVWAPLLNGGRLVIVDADVYTDAQRLAGLLERYAVTVLFLTPVLLNHYVPIIGQSLSKLRYLLSGGEQGSLHAYSTLLHLGGRVRLINAYGPTESTTIATTYEATISNIDALECLPIGRPMANTQVYVLDKHFQPVPTGAVGELYIGGAGLANGYLNRPDLTAELFLPNVFSKDGGARMYRTGDLVKYLPDGNLVFMGRNDEQVKIRGFRIELGEIETRLVEHELVTEAVVVALGNEGDKRLVAYVVAESAKQLASTLREHISTSLPEYMVPAAFVRLDALPFTANGKLDRRHLPAPDASAFVAQDYEAPRGDIEISLAEMWTDLLKIDQVGRHDNFFTLGGHSLLAVQMIEQLRRIGLSLSVRALFDTPVLSVLAASLNTHQAAPETPANLITAATTVITPDLLPLIDLTQGDIDCIVDQVPGGVANVQDVYSLSPLQDGILFHHMMATEGDPYLLIAGYSFRDRELLDRYLDAVQQIVDRHDILRTAIVSENLTVPAQVVLRKAPLSITELKLDPSDGAITSQLMQLYDARKYRIELRSAPLTRFIIAQDADGRWIMVQLLHHIIGDHSTLEIMDEEIKTILGGKANTLPAPQPFRNLVAQVRLGLTVQEHEEFFSKMLSDIDTPALPYGLSDVHREGAGVTETHLMLPPNLNDRLRRHAKRLGVSPASLCHLAWAQVIAATSGQRHVVFGTVLFGRMQGGSGADRTMGLFINTLPLRVDIENNTVLESVRKVQTDLATLLEHEHASLALAQRCSSIPSGSPLFSALLNYRHNATPFTQVETYDGVEAIEGHERTNYPFVLSVEDFGTSFGVTVQVVEPYASASVCGYMQQVLQSLADALEHTPDAPIQGLKVIPAEEHDLLIHSWNQTESSFPAHQCVHHVFENQVRERPEAIALVHGDQTLTYRELNARVNNLARQLMDAGVKPGDLVPTLLSRSIDLVIVQLAIVKAGAAYVPIDVKAPADRQAYIVSDSGARLLVTGEHTVVHNSIQVQLFRLRAIDAKNLHQQDVSVSIGAIGSSCDTAYVMYTSGSTGMPKGVMIPHRGITRLVINNGHANYGSDDCVVFGANPAFDASTIEVWAPLLNGGRLVIVDADVYTDAQRLAGVLERYAVTVLFLTPVLLNHYVPIIGQSLSKLRYLLSGGEQGSLHAYSTLLHLGGRVRLINAYGPTESTTIATTYEATISNIDALECLPIGRPMANTQVYVLDKHFQPVPTGAVGELYIGGAGLANGYLNRPDLTAELFLPNVFSKDGGARMYRTGDLVKYLPDGNLVFMGRNDEQVKIRGFRIELGEIEARLVEHELVTEAVVLALGSGSEKRLVAYVVAEHNEELLHILREHLAASVPEYMIPAAFVRLDQLPVTNNGKVDRRALPDPEATAFASTSYELPSGDVEIGLAEIWAELLSLDRVGRHDNFFMLGGHSLLAVRMAGSVRSRLGLDLKLHSLFAAPTVAELAQKLVQGGANEDDEYSVIFPLKTSGNRPPLFCIHSGLGLSWPYIGLVKHLHPEQPVYGVQARGLDGRTKLATSVEEMTLDYMEQIRRIQPHGPYHLLGWSFGGTVAHSMATELEKRGEQVPLLAIMDSTADYSIVAHLKVDEIDGGANFEHLVRFGGDVSGEDGWALWERTKPINDNSFVLAMQFKPSVYNGNILFFRATQKENDLTPMVNPFSWRPYTNGAIEVHNVECTHIEMDKPESMAIIGRTVTSKLQRS.

Over residues 1–13 the composition is skewed to basic and acidic residues; it reads MGDKRPDGIKSAE. The tract at residues 1-26 is disordered; sequence MGDKRPDGIKSAESHGQPSAPFGAEN. Positions 137–378 are condensation 1; sequence KEDDIARDES…IDIISPAEKT (242 aa). The tract at residues 401–799 is adenylation 1; that stretch reads FEEQVDKSPD…GRNDDQVKIR (399 aa). The 75-residue stretch at 901–975 folds into the Carrier 1 domain; that stretch reads VPCGETEDAI…VLAQDLSKHQ (75 aa). Residue Ser936 is modified to O-(pantetheine 4'-phosphoryl)serine. A dual epimerase/condensation (E/C) domain 1 region spans residues 1021–1469; it reads QDVYSLAPLQ…LPLDERTKLL (449 aa). The interval 1489–1899 is adenylation 2; that stretch reads FEQQVKQSPI…GRNDDQIKIR (411 aa). One can recognise a Carrier 2 domain in the interval 2001 to 2075; the sequence is SPQGRIECAL…SFAQAFKGQL (75 aa). Residue Ser2036 is modified to O-(pantetheine 4'-phosphoryl)serine. The condensation 2 stretch occupies residues 2095–2537; it reads ELSFSQQRLW…LGSTEEELLL (443 aa). Positions 2557–2956 are adenylation 3; it reads FEDQVERSPD…GRNDDQVKIR (400 aa). The Carrier 3 domain occupies 3058–3132; sequence EPQGEVEMKL…VLAASITRGC (75 aa). O-(pantetheine 4'-phosphoryl)serine is present on Ser3093. The dual epimerase/condensation (E/C) domain 2 stretch occupies residues 3182-3616; it reads QDIYSLSPLQ…VIPAEEHDLL (435 aa). The segment at 3637–4038 is adenylation 4; the sequence is FENQVRERPE…GRNDEQVKIR (402 aa). The 75-residue stretch at 4140 to 4214 folds into the Carrier 4 domain; it reads APRGDIEISL…VLAASLNTHQ (75 aa). O-(pantetheine 4'-phosphoryl)serine is present on Ser4175. A dual epimerase/condensation (E/C) domain 3 region spans residues 4260-4695; that stretch reads VQDVYSLSPL…VIPAEEHDLL (436 aa). An adenylation 5 region spans residues 4716–5117; it reads FENQVRERPE…GRNDEQVKIR (402 aa). In terms of domain architecture, Carrier 5 spans 5219 to 5294; sequence LPSGDVEIGL…ELAQKLVQGG (76 aa). Ser5254 bears the O-(pantetheine 4'-phosphoryl)serine mark. Positions 5315–5523 are thioesterase (TE) domain; it reads PLFCIHSGLG…VECTHIEMDK (209 aa).

It belongs to the NRP synthetase family.

Its function is as follows. Nonribosomal peptide synthetase that catalyzes the biosynthesis of the hydrophobic cyclopentapeptides malpibaldins, natural products that show biosurfactant activities. Module 3 shows promiscuous adenylation (accepting either Trp, Phe or Tyr) leading to the parallel production of multiple products from one NRPS assembly line, including malpibaldin A corresponding to cyclo(-L-Leu-D-Leu-D-Phe-L-Leu-D-Val-), malpibaldin B corresponding to cyclo(-L-Leu-D-Leu-D-Tyr-L-Leu-D-Val-) and malpibaldin C corresponding to cyclo(-Leu-Leu-Trp-Leu-Val-). The chain is Malpibaldin synthetase from Mortierella alpina (Oleaginous fungus).